A 123-amino-acid chain; its full sequence is Small ribosomal subunit protein uS12 (123 aa).

3-methylthioaspartic acid is present on Asp89. The tract at residues 104 to 123 (TQGVKDRRQRRSKYGAKRPK) is disordered. Residues 110 to 123 (RRQRRSKYGAKRPK) show a composition bias toward basic residues.

It belongs to the universal ribosomal protein uS12 family. Part of the 30S ribosomal subunit. Contacts proteins S8 and S17. May interact with IF1 in the 30S initiation complex.

Functionally, with S4 and S5 plays an important role in translational accuracy. In terms of biological role, interacts with and stabilizes bases of the 16S rRNA that are involved in tRNA selection in the A site and with the mRNA backbone. Located at the interface of the 30S and 50S subunits, it traverses the body of the 30S subunit contacting proteins on the other side and probably holding the rRNA structure together. The combined cluster of proteins S8, S12 and S17 appears to hold together the shoulder and platform of the 30S subunit. This chain is Small ribosomal subunit protein uS12, found in Rhodospirillum rubrum (strain ATCC 11170 / ATH 1.1.1 / DSM 467 / LMG 4362 / NCIMB 8255 / S1).